The primary structure comprises 546 residues: Probable bifunctional SAT/APS kinase (546 aa).

A sulfate adenylyltransferase region spans residues 1–370 (MEKIKYLKSI…LAETYVPKHK (370 aa)). The interval 371-546 (QGFCVWLTGL…FLKKEGFIKD (176 aa)) is adenylsulfate kinase. Position 379–386 (379–386 (GLPCAGKS)) interacts with ATP. Catalysis depends on Ser453, which acts as the Phosphoserine intermediate.

In the N-terminal section; belongs to the sulfate adenylyltransferase family. This sequence in the C-terminal section; belongs to the APS kinase family.

It carries out the reaction sulfate + ATP + H(+) = adenosine 5'-phosphosulfate + diphosphate. The enzyme catalyses adenosine 5'-phosphosulfate + ATP = 3'-phosphoadenylyl sulfate + ADP + H(+). Its pathway is sulfur metabolism; hydrogen sulfide biosynthesis; sulfite from sulfate: step 1/3. The protein operates within sulfur metabolism; hydrogen sulfide biosynthesis; sulfite from sulfate: step 2/3. The chain is Probable bifunctional SAT/APS kinase (sat/cysC) from Aquifex aeolicus (strain VF5).